We begin with the raw amino-acid sequence, 342 residues long: L-threonine 3-dehydrogenase (342 aa).

Cysteine 38 lines the Zn(2+) pocket. Residues threonine 40 and histidine 43 each act as charge relay system in the active site. Zn(2+) is bound by residues histidine 63, glutamate 64, cysteine 93, cysteine 96, cysteine 99, and cysteine 107. NAD(+)-binding positions include isoleucine 175, aspartate 195, arginine 200, 262-264 (LGI), and 286-287 (IY).

The protein belongs to the zinc-containing alcohol dehydrogenase family. Homotetramer. The cofactor is Zn(2+).

It is found in the cytoplasm. It carries out the reaction L-threonine + NAD(+) = (2S)-2-amino-3-oxobutanoate + NADH + H(+). It participates in amino-acid degradation; L-threonine degradation via oxydo-reductase pathway; glycine from L-threonine: step 1/2. In terms of biological role, catalyzes the NAD(+)-dependent oxidation of L-threonine to 2-amino-3-ketobutyrate. This chain is L-threonine 3-dehydrogenase, found in Burkholderia ambifaria (strain ATCC BAA-244 / DSM 16087 / CCUG 44356 / LMG 19182 / AMMD) (Burkholderia cepacia (strain AMMD)).